The sequence spans 257 residues: UPF0246 protein Daro_2893 (257 aa).

Belongs to the UPF0246 family.

The sequence is that of UPF0246 protein Daro_2893 from Dechloromonas aromatica (strain RCB).